Here is a 329-residue protein sequence, read N- to C-terminus: MNGVALDIAIHGAKIALIFFVVLTLAAYLVFAERRLLAWIQDRKGPNRVGPFGLLQPLADLIKLLTKEDFRPAGADKWLFYLAPAMAAVPAILTFAVIPFGAPVTILGREIPLQVADLNVGLLFFLALSSIAVYGVALGGWASNSKYALLGSIRGLAQLISYELSMGLSLVPTVMLAGSLRLSDIVAAQEGVWFIAYQPVAFLIFLISIAAECKRIPFDIPEAEGELVAGFHTEYSGMRFGLFFVGEYINIIVLGGLATTFFLGGWQGPLLPPFVWFSVKTLAFAFFFIWMRGTLPRLRYDQLMHLGWKVLTPLALLNILITGWVLMFV.

A run of 8 helical transmembrane segments spans residues 12–32 (GAKI…LVFA), 78–98 (WLFY…FAVI), 120–140 (VGLL…ALGG), 159–179 (LISY…LAGS), 191–211 (GVWF…SIAA), 242–262 (LFFV…TTFF), 270–290 (LLPP…FFIW), and 309–329 (KVLT…LMFV).

This sequence belongs to the complex I subunit 1 family. In terms of assembly, NDH-1 is composed of 14 different subunits. Subunits NuoA, H, J, K, L, M, N constitute the membrane sector of the complex.

It localises to the cell inner membrane. It carries out the reaction a quinone + NADH + 5 H(+)(in) = a quinol + NAD(+) + 4 H(+)(out). Its function is as follows. NDH-1 shuttles electrons from NADH, via FMN and iron-sulfur (Fe-S) centers, to quinones in the respiratory chain. The immediate electron acceptor for the enzyme in this species is believed to be ubiquinone. Couples the redox reaction to proton translocation (for every two electrons transferred, four hydrogen ions are translocated across the cytoplasmic membrane), and thus conserves the redox energy in a proton gradient. This subunit may bind ubiquinone. The sequence is that of NADH-quinone oxidoreductase subunit H 2 from Geobacter sulfurreducens (strain ATCC 51573 / DSM 12127 / PCA).